The primary structure comprises 184 residues: UPF0149 protein Pmen_0324 (184 aa).

This sequence belongs to the UPF0149 family.

This chain is UPF0149 protein Pmen_0324, found in Ectopseudomonas mendocina (strain ymp) (Pseudomonas mendocina).